Consider the following 348-residue polypeptide: Holliday junction branch migration complex subunit RuvB (348 aa).

The tract at residues 3–183 (DDGLVSAAAS…FGFTAHLDFY (181 aa)) is large ATPase domain (RuvB-L). Residues L22, R23, G64, K67, T68, S69, 130 to 132 (EDF), R173, Y183, and R220 each bind ATP. T68 serves as a coordination point for Mg(2+). The tract at residues 184 to 254 (DADELARVLT…IAQAALRIYD (71 aa)) is small ATPAse domain (RuvB-S). Residues 257-348 (GLGLDRLDRA…TQVSLFTEGE (92 aa)) form a head domain (RuvB-H) region. 2 residues coordinate DNA: R312 and R317.

It belongs to the RuvB family. As to quaternary structure, homohexamer. Forms an RuvA(8)-RuvB(12)-Holliday junction (HJ) complex. HJ DNA is sandwiched between 2 RuvA tetramers; dsDNA enters through RuvA and exits via RuvB. An RuvB hexamer assembles on each DNA strand where it exits the tetramer. Each RuvB hexamer is contacted by two RuvA subunits (via domain III) on 2 adjacent RuvB subunits; this complex drives branch migration. In the full resolvosome a probable DNA-RuvA(4)-RuvB(12)-RuvC(2) complex forms which resolves the HJ.

The protein resides in the cytoplasm. It carries out the reaction ATP + H2O = ADP + phosphate + H(+). Functionally, the RuvA-RuvB-RuvC complex processes Holliday junction (HJ) DNA during genetic recombination and DNA repair, while the RuvA-RuvB complex plays an important role in the rescue of blocked DNA replication forks via replication fork reversal (RFR). RuvA specifically binds to HJ cruciform DNA, conferring on it an open structure. The RuvB hexamer acts as an ATP-dependent pump, pulling dsDNA into and through the RuvAB complex. RuvB forms 2 homohexamers on either side of HJ DNA bound by 1 or 2 RuvA tetramers; 4 subunits per hexamer contact DNA at a time. Coordinated motions by a converter formed by DNA-disengaged RuvB subunits stimulates ATP hydrolysis and nucleotide exchange. Immobilization of the converter enables RuvB to convert the ATP-contained energy into a lever motion, pulling 2 nucleotides of DNA out of the RuvA tetramer per ATP hydrolyzed, thus driving DNA branch migration. The RuvB motors rotate together with the DNA substrate, which together with the progressing nucleotide cycle form the mechanistic basis for DNA recombination by continuous HJ branch migration. Branch migration allows RuvC to scan DNA until it finds its consensus sequence, where it cleaves and resolves cruciform DNA. The polypeptide is Holliday junction branch migration complex subunit RuvB (Frankia casuarinae (strain DSM 45818 / CECT 9043 / HFP020203 / CcI3)).